Here is a 104-residue protein sequence, read N- to C-terminus: Small ribosomal subunit protein uS10 (104 aa).

This sequence belongs to the universal ribosomal protein uS10 family. In terms of assembly, part of the 30S ribosomal subunit.

Functionally, involved in the binding of tRNA to the ribosomes. This is Small ribosomal subunit protein uS10 from Thermoplasma acidophilum (strain ATCC 25905 / DSM 1728 / JCM 9062 / NBRC 15155 / AMRC-C165).